A 163-amino-acid polypeptide reads, in one-letter code: Phosphopantetheine adenylyltransferase (163 aa).

Thr-11 is a binding site for substrate. Residues 11 to 12 and His-19 contribute to the ATP site; that span reads TF. Residues Lys-43, Leu-75, and Arg-89 each coordinate substrate. Residues 90 to 92, Glu-100, and 125 to 131 each bind ATP; these read GLR and YMFISAT.

Belongs to the bacterial CoaD family. Homohexamer. Requires Mg(2+) as cofactor.

The protein localises to the cytoplasm. The enzyme catalyses (R)-4'-phosphopantetheine + ATP + H(+) = 3'-dephospho-CoA + diphosphate. The protein operates within cofactor biosynthesis; coenzyme A biosynthesis; CoA from (R)-pantothenate: step 4/5. Its function is as follows. Reversibly transfers an adenylyl group from ATP to 4'-phosphopantetheine, yielding dephospho-CoA (dPCoA) and pyrophosphate. This is Phosphopantetheine adenylyltransferase from Aromatoleum aromaticum (strain DSM 19018 / LMG 30748 / EbN1) (Azoarcus sp. (strain EbN1)).